Here is a 485-residue protein sequence, read N- to C-terminus: Glutamyl-tRNA(Gln) amidotransferase subunit A (485 aa).

Active-site charge relay system residues include Lys78 and Ser153. The Acyl-ester intermediate role is filled by Ser177.

The protein belongs to the amidase family. GatA subfamily. In terms of assembly, heterotrimer of A, B and C subunits.

It carries out the reaction L-glutamyl-tRNA(Gln) + L-glutamine + ATP + H2O = L-glutaminyl-tRNA(Gln) + L-glutamate + ADP + phosphate + H(+). Functionally, allows the formation of correctly charged Gln-tRNA(Gln) through the transamidation of misacylated Glu-tRNA(Gln) in organisms which lack glutaminyl-tRNA synthetase. The reaction takes place in the presence of glutamine and ATP through an activated gamma-phospho-Glu-tRNA(Gln). The polypeptide is Glutamyl-tRNA(Gln) amidotransferase subunit A (Bacillus mycoides (strain KBAB4) (Bacillus weihenstephanensis)).